A 198-amino-acid polypeptide reads, in one-letter code: Holliday junction branch migration complex subunit RuvA (198 aa).

The tract at residues 1–63 (MYDYIKGQLT…EDAHLLFGFH (63 aa)) is domain I. The interval 64-142 (TEDEKDVFLK…EAPQETGHTK (79 aa)) is domain II. The tract at residues 143–147 (ARSNK) is flexible linker. The tract at residues 148-198 (AGNTQLDEAIEALLALGYKAKELKKIRAFFEGTSETAEQYIKSALKLLMKG) is domain III.

This sequence belongs to the RuvA family. As to quaternary structure, homotetramer. Forms an RuvA(8)-RuvB(12)-Holliday junction (HJ) complex. HJ DNA is sandwiched between 2 RuvA tetramers; dsDNA enters through RuvA and exits via RuvB. An RuvB hexamer assembles on each DNA strand where it exits the tetramer. Each RuvB hexamer is contacted by two RuvA subunits (via domain III) on 2 adjacent RuvB subunits; this complex drives branch migration. In the full resolvosome a probable DNA-RuvA(4)-RuvB(12)-RuvC(2) complex forms which resolves the HJ.

It is found in the cytoplasm. In terms of biological role, the RuvA-RuvB-RuvC complex processes Holliday junction (HJ) DNA during genetic recombination and DNA repair, while the RuvA-RuvB complex plays an important role in the rescue of blocked DNA replication forks via replication fork reversal (RFR). RuvA specifically binds to HJ cruciform DNA, conferring on it an open structure. The RuvB hexamer acts as an ATP-dependent pump, pulling dsDNA into and through the RuvAB complex. HJ branch migration allows RuvC to scan DNA until it finds its consensus sequence, where it cleaves and resolves the cruciform DNA. The polypeptide is Holliday junction branch migration complex subunit RuvA (Streptococcus pyogenes serotype M1).